A 119-amino-acid chain; its full sequence is MARVKRGVQARRRHKKILDLAKGYYNARRKVFRVAKQAVIKAQQYAYIGRKQKKRNFRSLWITRINAAARINGLSYSRFMNGLLKAGITLDRKVLADIAVHDAAGFAALAEKAKGALAA.

Belongs to the bacterial ribosomal protein bL20 family.

In terms of biological role, binds directly to 23S ribosomal RNA and is necessary for the in vitro assembly process of the 50S ribosomal subunit. It is not involved in the protein synthesizing functions of that subunit. In Stenotrophomonas maltophilia (strain K279a), this protein is Large ribosomal subunit protein bL20.